Consider the following 316-residue polypeptide: MANLKEIRDRIVSVKNTRKITEAMRLVAAAKVRRAQDQVLKSRPFADKLARVLENIQSRVQFEAVDSPLLSKRDVKTISLVCITADRGLCGGYNTNIIKKVEIRYAELIKQGYEPNLILVGKKAIGYFQNRKDRYIIKTTFKELEQVPTAKDSEGITSEVLAEFLSENADRVEIIYTKFITLVSCAPVVQTLLPLDPQGIADENDEIFRLTTKDSKLLVEKSNIEKSDSEKLPSDIVFEQSPDQLLDSLLPLYLQNQVLRALQESAASELACRMTAMNNASDNAKELASTLNLTYNKARQAAITQEILEVVGGSAV.

This sequence belongs to the ATPase gamma chain family. In terms of assembly, F-type ATPases have 2 components, CF(1) - the catalytic core - and CF(0) - the membrane proton channel. CF(1) has five subunits: alpha(3), beta(3), gamma(1), delta(1), epsilon(1). CF(0) has three main subunits: a, b and c.

Its subcellular location is the cellular thylakoid membrane. Its function is as follows. Produces ATP from ADP in the presence of a proton gradient across the membrane. The gamma chain is believed to be important in regulating ATPase activity and the flow of protons through the CF(0) complex. This Prochlorococcus marinus (strain MIT 9312) protein is ATP synthase gamma chain.